The chain runs to 877 residues: Telomere length regulation protein clk-2 (877 aa).

Over residues 488–501 the composition is skewed to polar residues; the sequence is NKDSAAITSKNNLR. The tract at residues 488–509 is disordered; sequence NKDSAAITSKNNLRLDSDDDED.

It belongs to the TEL2 family.

Its subcellular location is the nucleus. The protein resides in the chromosome. It localises to the telomere. DNA damage checkpoint protein required for DNA damage-induced cell cycle arrest and apoptosis, thereby playing a role in genome stability. Regulator of telomere length. This is Telomere length regulation protein clk-2 (clk-2) from Caenorhabditis elegans.